The sequence spans 554 residues: MGCSLNKLEKREEKRPGNIYSTLKRPQVETKVDVTYEYCFLEFTTLTAAELPRSSATRLASLRDLPDQLLELYQQGFSLAALHPFVQPTRRQEKILLEHIFRAILVKKTNRSQKAELHDEGYTLELDYCSSLEHLADQKLIPEFIKKVQEAASQGLKFVSVVPQYQPSVSSAGSRRLKPVANSVEDARDVKCTLGDRSSLENDTPKAAETDAATAGVNRRPETKPGSTGDVPSAQQPGIPSPSAENEAGEFPLRGLQPALDRSEGDPSNGPEELPSRKMEIFAFFNRPKSQQKCRQYYPVTIPLQVSKNGQTVSSLDASWLEHMSDHFRKGGVLVNAVFQLGMANDSFYGLTDGVFIFEAVSTEDNRTTQGYDAIVVEQWTVLEGTEVQTDYMPLLNSLAAYGWQLTCVLPTPILKTTREGNVSTKQIVFLQRPCLPQKTKKRESKFQWRFSRNEIHGRQTRKSKGKLSASNKQQAEENEKNLEDQFSKAGDVGNCVLGAPQWGRASEVREQRQGSAAVQNGPAGHNRDSVALRHSNPRAEAELAAGPTPTEAN.

Residue G2 is the site of N-myristoyl glycine attachment. A lipid anchor (S-palmitoyl cysteine) is attached at C3. Phosphoserine is present on residues S183 and S199. 3 disordered regions span residues 192–249 (CTLG…NEAG), 441–488 (KKRE…DQFS), and 504–554 (GRAS…TEAN). Basic and acidic residues-rich tracts occupy residues 198–209 (SSLENDTPKAAE) and 475–487 (QAEE…EDQF). Residues S507 and S530 each carry the phosphoserine modification. Residues 526–542 (HNRDSVALRHSNPRAEA) are compositionally biased toward basic and acidic residues.

It belongs to the raftlin family. Interacts with TLR4; the interaction occurs in response to lipopolysaccharide stimulation. Interacts with CLTC; the interaction occurs in response to pathogens. Interacts with AP2A1 and AP2B1. As to expression, expressed in T-cells, B-cells, thymus and spleen (at protein level). Expressed in dendritic cells, macrophages, heart, lung and small intestine.

It is found in the cell membrane. The protein resides in the cytoplasm. The protein localises to the membrane raft. Its subcellular location is the endosome. It localises to the early endosome. Involved in protein trafficking via association with clathrin and AP2 complex. Upon bacterial lipopolysaccharide stimulation, mediates internalization of TLR4 to endosomes in dendritic cells and macrophages, and internalization of poly(I:C) to TLR3-positive endosomes in myeloid dendritic cells and epithelial cells; resulting in activation of TICAM1-mediated signaling and subsequent IFNB1 production. Involved in T-cell antigen receptor-mediated signaling by regulating tyrosine kinase LCK localization, T-cell dependent antibody production and cytokine secretion. May regulate B-cell antigen receptor-mediated signaling. May play a pivotal role in the formation and/or maintenance of lipid rafts. This chain is Raftlin (Rftn1), found in Mus musculus (Mouse).